A 118-amino-acid polypeptide reads, in one-letter code: Small ribosomal subunit protein uS13 (118 aa).

The tract at residues 94 to 118 (GLPVRGQRTKTNARTRKGPRKPIRK) is disordered.

This sequence belongs to the universal ribosomal protein uS13 family. In terms of assembly, part of the 30S ribosomal subunit. Forms a loose heterodimer with protein S19. Forms two bridges to the 50S subunit in the 70S ribosome.

Its function is as follows. Located at the top of the head of the 30S subunit, it contacts several helices of the 16S rRNA. In the 70S ribosome it contacts the 23S rRNA (bridge B1a) and protein L5 of the 50S subunit (bridge B1b), connecting the 2 subunits; these bridges are implicated in subunit movement. Contacts the tRNAs in the A and P-sites. This is Small ribosomal subunit protein uS13 from Marinobacter nauticus (strain ATCC 700491 / DSM 11845 / VT8) (Marinobacter aquaeolei).